Reading from the N-terminus, the 679-residue chain is PHD finger protein PERSISTENT TAPETAL CELL 1 (679 aa).

The segment at 620 to 670 (VVDCACGAVDDDGERMACCDICEAWQHTRCAGIADTEDAPHVFLCSRCDND) adopts a PHD-type zinc-finger fold.

Its function is as follows. Probable transcriptional activator required for tapetal programmed cell death (PCD) and degeneration, and pollen development in anthers. This chain is PHD finger protein PERSISTENT TAPETAL CELL 1, found in Oryza sativa subsp. japonica (Rice).